The following is a 335-amino-acid chain: Ketol-acid reductoisomerase (NADP(+)) 2 (335 aa).

The 180-residue stretch at 1–180 (MKTYYEQDAN…GCTRAGVIET (180 aa)) folds into the KARI N-terminal Rossmann domain. Residues 24–27 (YGSQ), R47, S51, and 81–84 (DEQQ) each bind NADP(+). The active site involves H106. G132 serves as a coordination point for NADP(+). Residues 181–326 (TFQEETETDL…EELREMMSWI (146 aa)) enclose the KARI C-terminal knotted domain. D189, E193, E225, and E229 together coordinate Mg(2+). Position 250 (S250) interacts with substrate.

Belongs to the ketol-acid reductoisomerase family. Requires Mg(2+) as cofactor.

It catalyses the reaction (2R)-2,3-dihydroxy-3-methylbutanoate + NADP(+) = (2S)-2-acetolactate + NADPH + H(+). The catalysed reaction is (2R,3R)-2,3-dihydroxy-3-methylpentanoate + NADP(+) = (S)-2-ethyl-2-hydroxy-3-oxobutanoate + NADPH + H(+). It functions in the pathway amino-acid biosynthesis; L-isoleucine biosynthesis; L-isoleucine from 2-oxobutanoate: step 2/4. Its pathway is amino-acid biosynthesis; L-valine biosynthesis; L-valine from pyruvate: step 2/4. In terms of biological role, involved in the biosynthesis of branched-chain amino acids (BCAA). Catalyzes an alkyl-migration followed by a ketol-acid reduction of (S)-2-acetolactate (S2AL) to yield (R)-2,3-dihydroxy-isovalerate. In the isomerase reaction, S2AL is rearranged via a Mg-dependent methyl migration to produce 3-hydroxy-3-methyl-2-ketobutyrate (HMKB). In the reductase reaction, this 2-ketoacid undergoes a metal-dependent reduction by NADPH to yield (R)-2,3-dihydroxy-isovalerate. The chain is Ketol-acid reductoisomerase (NADP(+)) 2 from Bacillus thuringiensis subsp. konkukian (strain 97-27).